A 471-amino-acid polypeptide reads, in one-letter code: Putative multidrug resistance protein MdtD (471 aa).

The Periplasmic segment spans residues 1 to 11 (MTDLPDSTRWQ). The chain crosses the membrane as a helical span at residues 12 to 32 (LWIVAFGFFMQSLDTTIVNTA). Topologically, residues 33-48 (LPSMAQSLGESPLHMH) are cytoplasmic. Residues 49–69 (MVIVSYVLTVAVMLPASGWLA) form a helical membrane-spanning segment. The Periplasmic segment spans residues 70 to 76 (DKVGVRN). The helical transmembrane segment at 77–97 (IFFTAIVLFTLGSLFCALSGT) threads the bilayer. Residues 98–101 (LNEL) are Cytoplasmic-facing. Residues 102 to 124 (LLARALQGVGGAMMVPVGRLTVM) form a helical membrane-spanning segment. The Periplasmic portion of the chain corresponds to 125 to 137 (KIVPREQYMAAMT). Residues 138–158 (FVTLPGQVGPLLGPALGGLLV) traverse the membrane as a helical segment. Residues 159 to 164 (EYASWH) are Cytoplasmic-facing. Residues 165–185 (WIFLINIPVGIIGAIATLMLM) traverse the membrane as a helical segment. Topologically, residues 186–196 (PNYTMQTRRFD) are periplasmic. The helical transmembrane segment at 197–217 (LSGFLLLAVGMAVLTLALDGS) threads the bilayer. The Cytoplasmic portion of the chain corresponds to 218-224 (KGTGLSP). Residues 225–245 (LAIAGLVAVGVVALVLYLLHA) traverse the membrane as a helical segment. Residues 246–262 (RNNNRALFSLKLFRTRT) lie on the Periplasmic side of the membrane. A helical transmembrane segment spans residues 263 to 283 (FSLGLAGSFAGRIGSGMLPFM). At 284-285 (TP) the chain is on the cytoplasmic side. The chain crosses the membrane as a helical span at residues 286–306 (VFLQIGLGFSPFHAGLMMIPM). The Periplasmic portion of the chain corresponds to 307–341 (VLGSMGMKRIVVQVVNRFGYRRVLVATTLGLSLVT). The helical transmembrane segment at 342–362 (LLFMTTALLGWYYVLPFVLFL) threads the bilayer. Over 363-395 (QGMVNSTRFSSMNTLTLKDLPDNLASSGNSLLS) the chain is Cytoplasmic. Residues 396–416 (MIMQLSMSIGVTIAGLLLGLF) traverse the membrane as a helical segment. The Periplasmic segment spans residues 417–430 (GSQHISVDSGTTQT). The chain crosses the membrane as a helical span at residues 431–451 (VFMYTWLSMAFIIALPAFIFA). Residues 452 to 471 (RVPNDTHQNVAISRRKRSAQ) lie on the Cytoplasmic side of the membrane.

It belongs to the major facilitator superfamily. TCR/Tet family.

The protein localises to the cell inner membrane. This chain is Putative multidrug resistance protein MdtD, found in Shigella flexneri.